Here is a 150-residue protein sequence, read N- to C-terminus: Protein ORF35 (150 aa).

The protein is Protein ORF35 (ORF35) of Homo sapiens (Human).